The sequence spans 1035 residues: Cell-division control histidine kinase PdhS (1035 aa).

Residues 1–613 are important for polar localization; the sequence is MSGSYPFIDI…HADGSEEPVD (613 aa). Residues 500 to 533 are disordered; that stretch reads QGLANTRAESETPVSETSSIEPVEPTPPVKTRSE. Residues 614–1035 form an interaction with DivK region; that stretch reads AHLNAIAWRG…VFPPTRVLAD (422 aa). Residues 659–730 enclose the PAS domain; it reads HVEELKTILD…YLHGLSGNGV (72 aa). In terms of domain architecture, Histidine kinase spans 802 to 1031; it reads RISHEIRTPL…VVEIVFPPTR (230 aa). Phosphohistidine; by autocatalysis is present on His-805.

Interacts with DivK.

The protein localises to the cytoplasm. The catalysed reaction is ATP + protein L-histidine = ADP + protein N-phospho-L-histidine.. Functions as a polar differentiation marker. Essential protein that, by localizing in the old pole of dividing cells, controls cell division and maturation, probably through control of DivK phosphorylation status and cellular distribution, which in turn regulates CtrA, a transcriptional regulator of the minB operon. The asymmetrical localization of this protein is probably required for cells to enter a new division cycle. In Brucella suis biovar 1 (strain 1330), this protein is Cell-division control histidine kinase PdhS (pdhS).